The chain runs to 302 residues: tRNA dimethylallyltransferase (302 aa).

Residue 9–16 (GPTAAGKS) coordinates ATP. A substrate-binding site is contributed by 11–16 (TAAGKS). Residues 34 to 37 (DSRQ) are interaction with substrate tRNA.

Belongs to the IPP transferase family. Monomer. The cofactor is Mg(2+).

The enzyme catalyses adenosine(37) in tRNA + dimethylallyl diphosphate = N(6)-dimethylallyladenosine(37) in tRNA + diphosphate. In terms of biological role, catalyzes the transfer of a dimethylallyl group onto the adenine at position 37 in tRNAs that read codons beginning with uridine, leading to the formation of N6-(dimethylallyl)adenosine (i(6)A). The protein is tRNA dimethylallyltransferase of Gloeobacter violaceus (strain ATCC 29082 / PCC 7421).